Reading from the N-terminus, the 379-residue chain is Acetylornithine aminotransferase (379 aa).

Pyridoxal 5'-phosphate-binding positions include 93–94 (GA) and phenylalanine 120. Arginine 123 is a N(2)-acetyl-L-ornithine binding site. A pyridoxal 5'-phosphate-binding site is contributed by 205 to 208 (DEVQ). Lysine 234 bears the N6-(pyridoxal phosphate)lysine mark. Serine 262 contributes to the N(2)-acetyl-L-ornithine binding site. Threonine 263 provides a ligand contact to pyridoxal 5'-phosphate.

Belongs to the class-III pyridoxal-phosphate-dependent aminotransferase family. ArgD subfamily. In terms of assembly, homodimer. Pyridoxal 5'-phosphate serves as cofactor.

The protein localises to the cytoplasm. The catalysed reaction is N(2)-acetyl-L-ornithine + 2-oxoglutarate = N-acetyl-L-glutamate 5-semialdehyde + L-glutamate. It functions in the pathway amino-acid biosynthesis; L-arginine biosynthesis; N(2)-acetyl-L-ornithine from L-glutamate: step 4/4. The polypeptide is Acetylornithine aminotransferase (Streptococcus mutans serotype c (strain ATCC 700610 / UA159)).